The following is a 152-amino-acid chain: MHCPYCNASETKVIDSRLAAEGAQVRRRRSCNSCQERFTTFEVVEVVMPRIIKSSGKIEPYDNDKLRRSILLPLQKRPITIDEQEGMISRIEKRVRQMGEREVSSKVLGEIIMSELKTLDDVAYVRFASVYRDFQDIDAFHQEIANIRPNEK.

A zinc finger spans residues 3–34 (CPYCNASETKVIDSRLAAEGAQVRRRRSCNSC). In terms of domain architecture, ATP-cone spans 49 to 139 (PRIIKSSGKI…VYRDFQDIDA (91 aa)).

The protein belongs to the NrdR family. Zn(2+) is required as a cofactor.

In terms of biological role, negatively regulates transcription of bacterial ribonucleotide reductase nrd genes and operons by binding to NrdR-boxes. The polypeptide is Transcriptional repressor NrdR (Psychrobacter cryohalolentis (strain ATCC BAA-1226 / DSM 17306 / VKM B-2378 / K5)).